A 433-amino-acid polypeptide reads, in one-letter code: Steroid hormone receptor ERR2 (433 aa).

Residues 1-38 (MSSDDRHLGSSCGSFIKTEPSSPSSGIDALSHHSPSGS) form a disordered region. A compositionally biased stretch (low complexity) spans 28-38 (DALSHHSPSGS). The interaction with NANOG stretch occupies residues 93 to 211 (YMLNAIPKRL…SPPAKKPLTK (119 aa)). A DNA-binding region (nuclear receptor) is located at residues 100-186 (KRLCLVCGDI…RVRGGRQKYK (87 aa)). 2 consecutive NR C4-type zinc fingers follow at residues 103–123 (CLVC…CEAC) and 139–163 (CPAT…FMKC). Residues 203–433 (PPAKKPLTKI…LFLEMLEAKV (231 aa)) are essential for ESRRB transcriptional activity and interaction with NCOA3. The region spanning 208–432 (PLTKIVSYLL…KLFLEMLEAK (225 aa)) is the NR LBD domain.

The protein belongs to the nuclear hormone receptor family. NR3 subfamily. In terms of assembly, binds DNA as a monomer. Interacts with NR0B1; represses ESRRB activity at the GATA6 promoter. Interacts with NANOG; reciprocally modulates their transcriptional activities and activates POU5F1 expression. Interacts with NCOA3; mediates the interaction between ESRRB and RNA polymerase II complexes and allows NCOA3 corecruitment to ESRRB, KLF4, NANOG, and SOX2 enhancer regions to trigger ESRRB-dependent gene activation involved in self-renewal and pluripotency. Interacts with KDM1A; co-occupes the core set of ESRRB targets including ELF5 and EOMES. Interacts with the multiprotein complex Integrator, at least composed of INTS1, INTS2, INTS3, INTS4, INTS5, INTS6, INTS7, INTS8, INTS9/RC74, INTS10, INTS11/CPSF3L and INTS12; ESRRB is probably not a core component of the integrator complex and associates to integrator via its interaction with INTS1 and INTS9; attracts the transcriptional machinery. Interacts with JARID2. Interacts with POU5F1; recruits ESRRB near the POU5F1-SOX2 element in the NANOG proximal promoter leading to activation of NANOG expression; the interaction is DNA independent. Interacts with NFE2L2; represses NFE2L2 transcriptional activity. Isoform 1 interacts with ESR1. In terms of processing, acetylated by PCAF/KAT2 (in vitro).

The protein resides in the nucleus. The protein localises to the cytoplasm. Its subcellular location is the chromosome. Functionally, transcription factor that binds a canonical ESRRB recognition (ERRE) sequence 5'TCAAGGTCA-3' localized on promoter and enhancer of targets genes regulating their expression or their transcription activity. Plays a role, in a LIF-independent manner, in maintainance of self-renewal and pluripotency of embryonic and trophoblast stem cells through different signaling pathways including FGF signaling pathway and Wnt signaling pathways. Involved in morula development (2-16 cells embryos) by acting as a regulator at the 8-cell stage. Upon FGF signaling pathway activation, interacts with KDM1A by directly binding to enhancer site of ELF5 and EOMES and activating their transcription leading to self-renewal of trophoblast stem cells. Also regulates expression of multiple rod-specific genes and is required for survival of this cell type. Plays a role as transcription factor activator of GATA6, NR0B1, POU5F1 and PERM1. Plays a role as transcription factor repressor of NFE2L2 transcriptional activity and ESR1 transcriptional activity. During mitosis remains bound to a subset of interphase target genes, including pluripotency regulators, through the canonical ESRRB recognition (ERRE) sequence, leading to their transcriptional activation in early G1 phase. Can coassemble on structured DNA elements with other transcription factors like SOX2, POU5F1, KDM1A and NCOA3 to trigger ESRRB-dependent gene activation. This mechanism, in the case of SOX2 corecruitment prevents the embryonic stem cells (ESCs) to epiblast stem cells (EpiSC) transition through positive regulation of NR0B1 that inhibits the EpiSC transcriptional program. Also plays a role inner ear development by controlling expression of ion channels and transporters and in early placentation. Transcription factor that binds a canonical ESRRB recognition (ERRE) sequence 5'TCAAGGTCA-3' localized on promoter and enhancer of targets genes regulating their expression or their transcription activity. Positively regulates ESR1 transcriptional activity upon E2 stimulation. This is Steroid hormone receptor ERR2 from Homo sapiens (Human).